Reading from the N-terminus, the 425-residue chain is Serine hydroxymethyltransferase (425 aa).

(6S)-5,6,7,8-tetrahydrofolate-binding positions include L125 and 129 to 131; that span reads GHL. Position 234 is an N6-(pyridoxal phosphate)lysine (K234).

The protein belongs to the SHMT family. In terms of assembly, homodimer. The cofactor is pyridoxal 5'-phosphate.

The protein resides in the cytoplasm. It carries out the reaction (6R)-5,10-methylene-5,6,7,8-tetrahydrofolate + glycine + H2O = (6S)-5,6,7,8-tetrahydrofolate + L-serine. Its pathway is one-carbon metabolism; tetrahydrofolate interconversion. It participates in amino-acid biosynthesis; glycine biosynthesis; glycine from L-serine: step 1/1. Its function is as follows. Catalyzes the reversible interconversion of serine and glycine with tetrahydrofolate (THF) serving as the one-carbon carrier. This reaction serves as the major source of one-carbon groups required for the biosynthesis of purines, thymidylate, methionine, and other important biomolecules. Also exhibits THF-independent aldolase activity toward beta-hydroxyamino acids, producing glycine and aldehydes, via a retro-aldol mechanism. The sequence is that of Serine hydroxymethyltransferase from Marinomonas sp. (strain MWYL1).